The sequence spans 108 residues: UPF0060 membrane protein Nwi_1459 (108 aa).

Transmembrane regions (helical) follow at residues 5-25 (AAYVGAAIAEIAGCFAFWAWL), 31-51 (VWWLVPGMASLALFAYLLTLV), 61-81 (AAYGGIYIMASLGWLWSVEGI), and 88-108 (LAGALICLIGAVVILIGPHEI).

The protein belongs to the UPF0060 family.

It is found in the cell inner membrane. The protein is UPF0060 membrane protein Nwi_1459 of Nitrobacter winogradskyi (strain ATCC 25391 / DSM 10237 / CIP 104748 / NCIMB 11846 / Nb-255).